We begin with the raw amino-acid sequence, 453 residues long: MIGIVVSRADGASTHIWAQLREIEDFERIGPDAYRADGIEVRVFEELHTTIDDAADAFEAAVDMVVVVSRHSGDTGPLLSAHYTGNFGAAEYGGADRSVAPACPNAHHAVVDSLRSYAPPEYDVAMECTHHGPTSVGAPSMFVELGSSPAEWQDDAGARAVARAVRDLRGVPPHGDRAVVVFGGGHYTPRATRILADTDWPVGHVAADWSLTELGRPNAHRGVVDAMFTASGAAHALVEGDRPELTETIRDLGYTVVSETWVRETDGVPLSRVAALEESLTTVDDGLRFGEPAATHTGGYLVVELPDAVLDAAHAVDTAATVAAGRSHALAVTTVNAGRRLAGSAAFPDADAYEAFVDDVAAVLNAEYASVSRADGELTATREVFDPEAAAALGVPEGPAFGRLAGGEAIEHDGRTIAPAAVTSTETVRADVALHERPRERVRRPSDDEGKGN.

Positions 428–453 (VRADVALHERPRERVRRPSDDEGKGN) are disordered.

The protein belongs to the DtdA deacylase family. As to quaternary structure, monomer. It depends on Zn(2+) as a cofactor.

The catalysed reaction is a D-aminoacyl-tRNA + H2O = a tRNA + a D-alpha-amino acid + H(+). It carries out the reaction glycyl-tRNA(Ala) + H2O = tRNA(Ala) + glycine + H(+). Its function is as follows. D-aminoacyl-tRNA deacylase with broad substrate specificity. By recycling D-aminoacyl-tRNA to D-amino acids and free tRNA molecules, this enzyme counteracts the toxicity associated with the formation of D-aminoacyl-tRNA entities in vivo. This Halobacterium salinarum (strain ATCC 29341 / DSM 671 / R1) protein is D-aminoacyl-tRNA deacylase.